Consider the following 176-residue polypeptide: Translation initiation factor IF-3 (176 aa).

The protein belongs to the IF-3 family. Monomer.

It localises to the cytoplasm. IF-3 binds to the 30S ribosomal subunit and shifts the equilibrium between 70S ribosomes and their 50S and 30S subunits in favor of the free subunits, thus enhancing the availability of 30S subunits on which protein synthesis initiation begins. The chain is Translation initiation factor IF-3 from Nitratidesulfovibrio vulgaris (strain ATCC 29579 / DSM 644 / CCUG 34227 / NCIMB 8303 / VKM B-1760 / Hildenborough) (Desulfovibrio vulgaris).